We begin with the raw amino-acid sequence, 388 residues long: Mannitol-1-phosphate 5-dehydrogenase (388 aa).

5–16 (AIQFGGGNIGRG) serves as a coordination point for NAD(+). Lys213 is an active-site residue.

The protein belongs to the mannitol dehydrogenase family. In terms of assembly, monomer.

The enzyme catalyses D-mannitol 1-phosphate + NAD(+) = beta-D-fructose 6-phosphate + NADH + H(+). Its function is as follows. Catalyzes the NAD(H)-dependent interconversion of D-fructose 6-phosphate and D-mannitol 1-phosphate in the mannitol metabolic pathway. This is Mannitol-1-phosphate 5-dehydrogenase (mpdA) from Aspergillus clavatus (strain ATCC 1007 / CBS 513.65 / DSM 816 / NCTC 3887 / NRRL 1 / QM 1276 / 107).